The following is a 188-amino-acid chain: Nicotinamide-nucleotide adenylyltransferase (188 aa).

This sequence belongs to the archaeal NMN adenylyltransferase family.

It localises to the cytoplasm. The enzyme catalyses beta-nicotinamide D-ribonucleotide + ATP + H(+) = diphosphate + NAD(+). Its pathway is cofactor biosynthesis; NAD(+) biosynthesis; NAD(+) from nicotinamide D-ribonucleotide: step 1/1. The polypeptide is Nicotinamide-nucleotide adenylyltransferase (Pyrococcus furiosus (strain ATCC 43587 / DSM 3638 / JCM 8422 / Vc1)).